We begin with the raw amino-acid sequence, 495 residues long: E3 ubiquitin-protein ligase RAD18 (495 aa).

M1 carries the N-acetylmethionine modification. The segment at 25-64 adopts an RING-type zinc-finger fold; the sequence is CGICFEYFNIAMIIPQCSHNYCSLCIRKFLSYKTQCPTCC. S99 and S103 each carry phosphoserine. A Phosphothreonine modification is found at T118. Residues S122, S125, S142, S158, and S164 each carry the phosphoserine modification. The tract at residues 152–197 is disordered; sequence ENKSKFSPQKEASPAAKTKETRSVEEIAPDPSEAKRPEPPSTSTLK. A UBZ4-type zinc finger spans residues 201-228; that stretch reads KVDCPVCGVNIPESHINKHLDSCLSREE. The Zn(2+) site is built by C204, C207, H219, and C223. The short motif at 232–240 is the LR motif element; the sequence is SLRSSVHKR. The SAP domain occupies 248-282; sequence YNLLSDRDLKKKLKEHGLSIQGNKQQLIKRHQEFV. S322 carries the phosphoserine modification. A Glycyl lysine isopeptide (Lys-Gly) (interchain with G-Cter in SUMO2) cross-link involves residue K376. 2 disordered regions span residues 400-423 and 456-495; these read NHFS…DSSS and AWEA…RNRN. Residues 410 to 421 are compositionally biased toward acidic residues; the sequence is PEELEPDREEDS. A phosphoserine mark is found at S471 and S483. A compositionally biased stretch (basic and acidic residues) spans 479 to 495; the sequence is RAAESAEIEPRNKRNRN.

Belongs to the RAD18 family. In terms of assembly, homodimer. Interacts with UBE2A and UBE2B, one homodimer binding one molecule of UBE2B. Interacts with SHPRH. Interacts with HLTF. Interacts with SPRTN; leading to enhance chromatin association of RAD18 and RAD18-mediated PCNA ubiquitination and translesion DNA synthesis. Interacts (via C-terminus and phosphorylated form) with SLF1 (via BRCT domains); this interaction is required for efficient repair of UV-induced DNA damage. Interacts with SLF2. Interacts with SMC5; this interaction is increased in a SLF1 or SLF2-dependent manner. Interacts with DNA damage up-regulated protein DDUP. Forms a complex with DDUP and H2AX following DDUP phosphorylation.

The protein localises to the nucleus. Its subcellular location is the cytoplasm. It is found in the cytoskeleton. It localises to the microtubule organizing center. The protein resides in the centrosome. It carries out the reaction S-ubiquitinyl-[E2 ubiquitin-conjugating enzyme]-L-cysteine + [acceptor protein]-L-lysine = [E2 ubiquitin-conjugating enzyme]-L-cysteine + N(6)-ubiquitinyl-[acceptor protein]-L-lysine.. It functions in the pathway protein modification; protein ubiquitination. E3 ubiquitin-protein ligase involved in postreplication repair of UV-damaged DNA. Postreplication repair functions in gap-filling of a daughter strand on replication of damaged DNA. Associates to the E2 ubiquitin conjugating enzyme UBE2B to form the UBE2B-RAD18 ubiquitin ligase complex involved in mono-ubiquitination of DNA-associated PCNA on 'Lys-164'. Has ssDNA binding activity. The chain is E3 ubiquitin-protein ligase RAD18 (RAD18) from Homo sapiens (Human).